The chain runs to 263 residues: uncharacterized protein (263 aa).

This is an uncharacterized protein from Mycobacterium tuberculosis (strain CDC 1551 / Oshkosh).